A 385-amino-acid polypeptide reads, in one-letter code: Linearmycin resistance permease protein LnrN (385 aa).

6 helical membrane-spanning segments follow: residues 22 to 42 (YLIMFAAPLLLTFVFGSMLSG), 198 to 218 (AAGFSILFVMLTMMGAAGTIL), 239 to 259 (IGAGYVLSFFVIGWIQFGILL), 274 to 294 (AAVIVLVSLFLLTVVGIGLMI), 305 to 325 (LAFGNLFVIATCMVSGMYWPI), and 360 to 380 (DILGICGILLAFAAITFAAGL). An ABC transmembrane type-2 domain is found at 163-382 (KTVFAKKHED…AITFAAGLKA (220 aa)).

This sequence belongs to the ABC-2 integral membrane protein family. As to quaternary structure, the complex is composed of two ATP-binding proteins (LnrL) and two transmembrane proteins (LnrM and LnrN).

The protein localises to the cell membrane. In terms of biological role, required for resistance to linearmycins, a family of antibiotic-specialized metabolites produced by some streptomycetes. Part of the ABC transporter complex LnrLMN that probably facilitates linearmycin removal from the membrane. Responsible for the translocation of the substrate across the membrane. Also mediates KinC-dependent biofilm morphology. This Bacillus subtilis (strain 168) protein is Linearmycin resistance permease protein LnrN.